Consider the following 405-residue polypeptide: MKVLILNAGSSSQKSCLYEIPDDALLSEAPQPLWEGKVNWTQDRSVAEIEVKTARGETLHESIYGDSRQAHVTYMLYTLSRGATKVIGQLSEIDVVGHRVVHGGQNYRHSVIITEEVKQAIAKLSNLAPAHNPAALEGIEAIEKSLGDVPQVAVFDTGFHATLPDAAAIYPGPFEWVEQGIRRYGFHGISHQYCSARAAQILGRDLASLRIITCHLGNGCSLAAIKNGRSIDTTMGFTPLDGLMMGSRSGAIDPGIIVHLMRQSDYSAERLDYVLNKASGLRGISGVSSDLPQVIEAITQGNYRAQLAWDMYVHRLRSGIGSMLASLGGLDVLVFTAGVGEKSAGIRQAACEAFGFLGLKLDPEKNQNKPVDIDIATADSTVRVLVIHTQEDWAIAQQCWHLLKR.

Asparagine 7 contributes to the Mg(2+) binding site. Position 14 (lysine 14) interacts with ATP. Arginine 99 contributes to the substrate binding site. Catalysis depends on aspartate 156, which acts as the Proton donor/acceptor. 215 to 219 (HLGNG) provides a ligand contact to ATP. Glutamate 391 contacts Mg(2+).

It belongs to the acetokinase family. In terms of assembly, homodimer. It depends on Mg(2+) as a cofactor. Requires Mn(2+) as cofactor.

The protein resides in the cytoplasm. The enzyme catalyses acetate + ATP = acetyl phosphate + ADP. It participates in metabolic intermediate biosynthesis; acetyl-CoA biosynthesis; acetyl-CoA from acetate: step 1/2. In terms of biological role, catalyzes the formation of acetyl phosphate from acetate and ATP. Can also catalyze the reverse reaction. This chain is Acetate kinase, found in Nostoc sp. (strain PCC 7120 / SAG 25.82 / UTEX 2576).